A 225-amino-acid chain; its full sequence is MSLIEFPLLDQTSSNSVISTTLKDLSNWSRLSSLWPLLYGTSCCFIEFASLIGSRFDFDRYGLVPRSSPRQADLILTAGTVTMKMAPSLVRLYEQMPEPKYVIAMGACTITGGMFSTDSYSTVRGVDKLIPVDVYLPGCPPKPEAVIDALTKLRKKISREIVEDRTLSQKKNRCFTTSHKLYVRRSTNTGTYEQELLYQSPSTLDISSETFFKSKSPVSSYKLVN.

Cys-43, Cys-44, Cys-108, and Cys-139 together coordinate [4Fe-4S] cluster.

This sequence belongs to the complex I 20 kDa subunit family. As to quaternary structure, NDH is composed of at least 16 different subunits, 5 of which are encoded in the nucleus. It depends on [4Fe-4S] cluster as a cofactor.

The protein resides in the plastid. The protein localises to the chloroplast thylakoid membrane. It carries out the reaction a plastoquinone + NADH + (n+1) H(+)(in) = a plastoquinol + NAD(+) + n H(+)(out). The catalysed reaction is a plastoquinone + NADPH + (n+1) H(+)(in) = a plastoquinol + NADP(+) + n H(+)(out). Functionally, NDH shuttles electrons from NAD(P)H:plastoquinone, via FMN and iron-sulfur (Fe-S) centers, to quinones in the photosynthetic chain and possibly in a chloroplast respiratory chain. The immediate electron acceptor for the enzyme in this species is believed to be plastoquinone. Couples the redox reaction to proton translocation, and thus conserves the redox energy in a proton gradient. This chain is NAD(P)H-quinone oxidoreductase subunit K, chloroplastic, found in Oryza nivara (Indian wild rice).